Reading from the N-terminus, the 148-residue chain is Ribonuclease pancreatic (148 aa).

Residues 1–25 (MGLEKSLILFPLLVLVVGWVQPSLG) form the signal peptide. Substrate is bound by residues K32, R35, 65 to 69 (KPVNT), K90, and R109. 4 disulfides stabilise this stretch: C50–C108, C64–C119, C82–C134, and C89–C96. H143 serves as the catalytic Proton donor.

The protein belongs to the pancreatic ribonuclease family. As to quaternary structure, monomer. Interacts with and forms tight 1:1 complexes with RNH1. Dimerization of two such complexes may occur. Interaction with RNH1 inhibits this protein. As to expression, pancreas.

It is found in the secreted. It catalyses the reaction an [RNA] containing cytidine + H2O = an [RNA]-3'-cytidine-3'-phosphate + a 5'-hydroxy-ribonucleotide-3'-[RNA].. The enzyme catalyses an [RNA] containing uridine + H2O = an [RNA]-3'-uridine-3'-phosphate + a 5'-hydroxy-ribonucleotide-3'-[RNA].. Functionally, endonuclease that catalyzes the cleavage of RNA on the 3' side of pyrimidine nucleotides. Acts on single-stranded and double-stranded RNA. The protein is Ribonuclease pancreatic (RNASE1) of Peromyscus leucopus (White-footed mouse).